The primary structure comprises 384 residues: Homoserine O-succinyltransferase (384 aa).

An AB hydrolase-1 domain is found at 51–361; it reads NAILICHALS…ETSQGHDAFL (311 aa). S157 (nucleophile) is an active-site residue. R227 contacts substrate. Active-site residues include D324 and H357. D358 is a substrate binding site.

Belongs to the AB hydrolase superfamily. MetX family. In terms of assembly, homodimer.

It localises to the cytoplasm. The catalysed reaction is L-homoserine + succinyl-CoA = O-succinyl-L-homoserine + CoA. It participates in amino-acid biosynthesis; L-methionine biosynthesis via de novo pathway; O-succinyl-L-homoserine from L-homoserine: step 1/1. Transfers a succinyl group from succinyl-CoA to L-homoserine, forming succinyl-L-homoserine. In Alkalilimnicola ehrlichii (strain ATCC BAA-1101 / DSM 17681 / MLHE-1), this protein is Homoserine O-succinyltransferase.